The primary structure comprises 193 residues: Acyl carrier protein phosphodiesterase (193 aa).

This sequence belongs to the AcpH family.

It catalyses the reaction holo-[ACP] + H2O = apo-[ACP] + (R)-4'-phosphopantetheine + H(+). Its function is as follows. Converts holo-ACP to apo-ACP by hydrolytic cleavage of the phosphopantetheine prosthetic group from ACP. The sequence is that of Acyl carrier protein phosphodiesterase from Shigella boydii serotype 4 (strain Sb227).